The primary structure comprises 512 residues: MSMTICSNTPGAYPEIGAYNEVDKQLESSGFSSDSSLILNKPEVRQYWSSVSSHISRSGDVFTNDKEKISSSIGEDAMDIDASPSLIEKYNSFPTRKILPEQDEFENDVEDDASSSLKEKSQGSCEIEIASEISSEILNGTSADGNSEFHDFAEPPPSQNESVALSFSQSNDLDFLNNPSGSGSSNDINRSTSSISLPRHVSLDFNVYNSLCLTNEVTASESHNVAKFHLGKKNKKSLLPRWKTIEMYGEVVKKTQDIYSNFQYAQYILRVGLDTEKLHELVKELEDESNSFSVDSLKEYLVNDAKVILKKLSAVGYPDAQYLLGDAYSSGVFGKIKNRRAFLLFSAAAKRMHIESVYRTAICYECGLGVTRNAPKAVNFLTFAATKNHPAAMYKLGVYSYHGLMGLPDDILTKMDGYRWLRRATSMASSFVCGAPFELANIYMTGYKDLIISDPDYAMALYEKAAALGHTESARILEDARRSGGFVSRGHPPSAQKYHKTSHEAVAAKKLI.

A compositionally biased stretch (acidic residues) spans 101–113; that stretch reads EQDEFENDVEDDA. 2 disordered regions span residues 101 to 122 and 144 to 164; these read EQDE…EKSQ and DGNS…ESVA. Sel1-like repeat units follow at residues 318–353, 354–389, 390–429, and 433–470; these read PDAQ…KRMH, IESV…TKNH, PAAM…SMAS, and CGAP…ALGH.

Belongs to the SKT5 family.

The protein localises to the cytoplasm. It is found in the cytoplasmic granule membrane. Its function is as follows. Required for the activation of chitin synthase III (CHS3) activity during the sporulation process. The chain is Protein SHC1 (SHC1) from Saccharomyces cerevisiae (strain ATCC 204508 / S288c) (Baker's yeast).